The following is a 302-amino-acid chain: Aspartate carbamoyltransferase catalytic subunit (302 aa).

The carbamoyl phosphate site is built by Arg53 and Thr54. An L-aspartate-binding site is contributed by Lys82. Positions 103, 131, and 134 each coordinate carbamoyl phosphate. 2 residues coordinate L-aspartate: Arg164 and Arg223. Carbamoyl phosphate is bound by residues Leu260 and Pro261.

This sequence belongs to the aspartate/ornithine carbamoyltransferase superfamily. ATCase family. In terms of assembly, heterooligomer of catalytic and regulatory chains.

The enzyme catalyses carbamoyl phosphate + L-aspartate = N-carbamoyl-L-aspartate + phosphate + H(+). It participates in pyrimidine metabolism; UMP biosynthesis via de novo pathway; (S)-dihydroorotate from bicarbonate: step 2/3. In terms of biological role, catalyzes the condensation of carbamoyl phosphate and aspartate to form carbamoyl aspartate and inorganic phosphate, the committed step in the de novo pyrimidine nucleotide biosynthesis pathway. The sequence is that of Aspartate carbamoyltransferase catalytic subunit from Methanococcus maripaludis (strain C6 / ATCC BAA-1332).